Consider the following 345-residue polypeptide: Nuclear distribution protein nudE-like 1 (345 aa).

Positions 28–190 (QSFQEARDEL…LAVRERQQEV (163 aa)) form a coiled coil. Residues 56–166 (VQAEQRNRDL…LDEKESLLVS (111 aa)) are self-association. Residues 64 to 189 (DLQADNQRLK…ELAVRERQQE (126 aa)) form an interaction with KATNB1 region. The interval 114 to 133 (YVRELEQANDDLERAKRATI) is required for interaction with PAFAH1B1. Residues 175-345 (RDLRQELAVR…SAPGMLPLSV (171 aa)) are interaction with CENPF. An interaction with YWHAE region spans residues 189-256 (EVTRKSAPSS…SARISALNIV (68 aa)). The segment at 191–345 (TRKSAPSSPT…SAPGMLPLSV (155 aa)) is interaction with NEFL. The segment at 195–256 (APSSPTLDCE…SARISALNIV (62 aa)) is interaction with KATNA1. Residue S215 is modified to Phosphoserine. T219 is modified (phosphothreonine; by CDK1 and MAPK1). S231 carries the post-translational modification Phosphoserine. Residues 241–280 (TSPLTPSARISALNIVGDLLRKVGALESKLAACRNFAKDQ) form an interaction with DISC1 region. At S242 the chain carries Phosphoserine; by CDK1. T245 is subject to Phosphothreonine; by CDK1 and MAPK1. The required for localization to the centrosome and interaction with dynein, dynactin, tubulin gamma, PCM1 and PCNT stretch occupies residues 256–291 (VGDLLRKVGALESKLAACRNFAKDQASRKSYISGNV). The S-palmitoyl cysteine; by ZDHHC2, ZDHHC3 and ZDHHC7 moiety is linked to residue C273. The disordered stretch occupies residues 315-345 (GAVNGFDPAPPPPGLGSSRPSSAPGMLPLSV). Residues 329–339 (LGSSRPSSAPG) are compositionally biased toward low complexity. The residue at position 344 (S344) is a Phosphoserine.

It belongs to the nudE family. In terms of assembly, interacts with PLEKHM1 (via N- and C-terminus). Interacts with YWHAE. Interacts directly with NEFL and indirectly with NEFH. Interacts with microtubules. Self-associates. Interacts with DISC1, dynein, dynactin, tubulin gamma, KATNA1, KATNB1, PAFAH1B1, PCM1 and PCNT. Interacts (via C-terminus) with CENPF. Interacts with ZNF365. Interacts with GTP-bound RAB9A; the interaction may lead to RAB9A-dynein motor tethering. Phosphorylated in mitosis. Can be phosphorylated by CDK1, CDK5 and MAPK1. Phosphorylation by CDK5 promotes interaction with KATNA1 and YWHAE. In terms of processing, palmitoylation at Cys-273 reduces affinity for dynein. In terms of tissue distribution, expressed in brain, heart, kidney, liver, lung, pancreas, placenta and skeletal muscle.

It is found in the cytoplasm. The protein resides in the cytoskeleton. The protein localises to the microtubule organizing center. Its subcellular location is the centrosome. It localises to the chromosome. It is found in the centromere. The protein resides in the kinetochore. The protein localises to the spindle. In terms of biological role, required for organization of the cellular microtubule array and microtubule anchoring at the centrosome. May regulate microtubule organization at least in part by targeting the microtubule severing protein KATNA1 to the centrosome. Also positively regulates the activity of the minus-end directed microtubule motor protein dynein. May enhance dynein-mediated microtubule sliding by targeting dynein to the microtubule plus ends. Required for several dynein- and microtubule-dependent processes such as the maintenance of Golgi integrity, the centripetal motion of secretory vesicles and the coupling of the nucleus and centrosome. Also required during brain development for the migration of newly formed neurons from the ventricular/subventricular zone toward the cortical plate. Plays a role, together with DISC1, in the regulation of neurite outgrowth. Required for mitosis in some cell types but appears to be dispensible for mitosis in cortical neuronal progenitors, which instead requires NDE1. Facilitates the polymerization of neurofilaments from the individual subunits NEFH and NEFL. Positively regulates lysosome peripheral distribution and ruffled border formation in osteoclasts. Plays a role, together with DISC1, in the regulation of neurite outgrowth. May act as a RAB9A/B effector that tethers RAB9-associated late endosomes to the dynein motor for their retrograde transport to the trans-Golgi network. The sequence is that of Nuclear distribution protein nudE-like 1 (NDEL1) from Homo sapiens (Human).